Reading from the N-terminus, the 505-residue chain is DNA primase large subunit (505 aa).

The interval 253–270 (LSHSYTGQDYSTQKNTGK) is interdomain linker. The tract at residues 266-503 (KNTGKISLDQ…LEMDLEGLEE (238 aa)) is interacts with PRIM1. [4Fe-4S] cluster-binding residues include Cys287, Cys367, Cys384, and Cys424. The segment at 300–442 (HLRHGGRMQY…NVDDCGFSLN (143 aa)) is RNA:DNA duplex binding. The segment at 463–486 (KEISQPETPQHKPSTQKTRDAASA) is disordered. Residues 467-478 (QPETPQHKPSTQ) show a composition bias toward polar residues. Thr470 carries the phosphothreonine modification.

The protein belongs to the eukaryotic-type primase large subunit family. In terms of assembly, heterodimer of a catalytic subunit PRIM1 and a regulatory subunit PRIM2, also known as the DNA primase complex. Interacts via (C-terminus) with PRIM1. Component of the alpha DNA polymerase complex (also known as the alpha DNA polymerase-primase complex) consisting of four subunits: the catalytic subunit POLA1, the regulatory subunit POLA2, and the primase complex subunits PRIM1 and PRIM2 respectively. Within the complex, POLA1 directly interacts with PRIM2. It depends on [4Fe-4S] cluster as a cofactor.

Functionally, regulatory subunit of the DNA primase complex and component of the DNA polymerase alpha complex (also known as the alpha DNA polymerase-primase complex) which play an essential role in the initiation of DNA synthesis. During the S phase of the cell cycle, the DNA polymerase alpha complex (composed of a catalytic subunit POLA1, an accessory subunit POLA2 and two primase subunits, the catalytic subunit PRIM1 and the regulatory subunit PRIM2) is recruited to DNA at the replicative forks via direct interactions with MCM10 and WDHD1. The primase subunit of the polymerase alpha complex initiates DNA synthesis by oligomerising short RNA primers on both leading and lagging strands. These primers are initially extended by the polymerase alpha catalytic subunit and subsequently transferred to polymerase delta and polymerase epsilon for processive synthesis on the lagging and leading strand, respectively. In the primase complex, both subunits are necessary for the initial di-nucleotide formation, but the extension of the primer depends only on the catalytic subunit. Binds RNA:DNA duplex and coordinates the catalytic activities of PRIM1 and POLA2 during primase-to-polymerase switch. In Mus musculus (Mouse), this protein is DNA primase large subunit (Prim2).